The primary structure comprises 60 residues: Ferredoxin (60 aa).

2 consecutive 4Fe-4S ferredoxin-type domains span residues 2–30 (VTID…EIQG) and 31–60 (DKVV…TVKE). C9, C14, C17, C21, C41, C44, C47, and C51 together coordinate [4Fe-4S] cluster.

[4Fe-4S] cluster is required as a cofactor.

In terms of biological role, ferredoxins are iron-sulfur proteins that transfer electrons probably in the CO-dehydrogenase complex. This Methanothermococcus thermolithotrophicus (Methanococcus thermolithotrophicus) protein is Ferredoxin.